Reading from the N-terminus, the 380-residue chain is Queuine tRNA-ribosyltransferase (380 aa).

Asp96 serves as the catalytic Proton acceptor. Residues 96–100 (DSGGF), Asp150, Gln193, and Gly220 contribute to the substrate site. The segment at 251–257 (GVGAPDS) is RNA binding. Asp270 (nucleophile) is an active-site residue. Positions 275–279 (TRIAR) are RNA binding; important for wobble base 34 recognition. Cys308, Cys310, Cys313, and His339 together coordinate Zn(2+).

It belongs to the queuine tRNA-ribosyltransferase family. Homodimer. Within each dimer, one monomer is responsible for RNA recognition and catalysis, while the other monomer binds to the replacement base PreQ1. Requires Zn(2+) as cofactor.

The catalysed reaction is 7-aminomethyl-7-carbaguanine + guanosine(34) in tRNA = 7-aminomethyl-7-carbaguanosine(34) in tRNA + guanine. The protein operates within tRNA modification; tRNA-queuosine biosynthesis. In terms of biological role, catalyzes the base-exchange of a guanine (G) residue with the queuine precursor 7-aminomethyl-7-deazaguanine (PreQ1) at position 34 (anticodon wobble position) in tRNAs with GU(N) anticodons (tRNA-Asp, -Asn, -His and -Tyr). Catalysis occurs through a double-displacement mechanism. The nucleophile active site attacks the C1' of nucleotide 34 to detach the guanine base from the RNA, forming a covalent enzyme-RNA intermediate. The proton acceptor active site deprotonates the incoming PreQ1, allowing a nucleophilic attack on the C1' of the ribose to form the product. After dissociation, two additional enzymatic reactions on the tRNA convert PreQ1 to queuine (Q), resulting in the hypermodified nucleoside queuosine (7-(((4,5-cis-dihydroxy-2-cyclopenten-1-yl)amino)methyl)-7-deazaguanosine). The chain is Queuine tRNA-ribosyltransferase from Streptococcus pyogenes serotype M49 (strain NZ131).